Reading from the N-terminus, the 119-residue chain is PFDIPEPYVWDESFRVFYDNLDDEHKGLFKGVFNCAADMSSAGNLKHLIDVTTTHFRNEEAMMDAAKYENVVPHKQMHKDFLAKLGGLKAPLDQGTIDYAKDWLVQHIKTTDFKYKGKL.

Fe cation contacts are provided by His25, His55, Asn58, Glu59, His74, His78, His107, and Asp112.

The protein belongs to the hemerythrin family. Monomer. In terms of tissue distribution, muscle.

Myohemerythrin is an oxygen-binding protein found in the retractor muscles of certain worms. The oxygen-binding site contains two iron atoms. The sequence is that of Myohemerythrin-1 from Phascolopsis gouldii (Peanut worm).